A 351-amino-acid chain; its full sequence is Phospho-N-acetylmuramoyl-pentapeptide-transferase (351 aa).

Helical transmembrane passes span 17–37 (TAYATIFAFLLALIFGPFIIL), 63–83 (IPTMGGILIFFCVLVSLFFWI), 85–105 (LWNVYFLIVLFVMISFACLGF), 135–155 (ISVTMLYYFGGEHISIIYFPF), 158–178 (SLKLDLGVLYIPFGMFILISA), 190–210 (GLAIGLSIVVTGALVIIAYLT), 230–250 (LVIFLGALLGGSFGFLWFNAY), 254–274 (IMMGDTGSLSIGAVLGMTALI), 279–299 (ILFAILAGVFVLETLSVIIQV), and 328–348 (QVVIRFWIIGLIFAIIALSTL).

The protein belongs to the glycosyltransferase 4 family. MraY subfamily. Mg(2+) serves as cofactor.

Its subcellular location is the cell inner membrane. It carries out the reaction UDP-N-acetyl-alpha-D-muramoyl-L-alanyl-gamma-D-glutamyl-meso-2,6-diaminopimeloyl-D-alanyl-D-alanine + di-trans,octa-cis-undecaprenyl phosphate = di-trans,octa-cis-undecaprenyl diphospho-N-acetyl-alpha-D-muramoyl-L-alanyl-D-glutamyl-meso-2,6-diaminopimeloyl-D-alanyl-D-alanine + UMP. It functions in the pathway cell wall biogenesis; peptidoglycan biosynthesis. Catalyzes the initial step of the lipid cycle reactions in the biosynthesis of the cell wall peptidoglycan: transfers peptidoglycan precursor phospho-MurNAc-pentapeptide from UDP-MurNAc-pentapeptide onto the lipid carrier undecaprenyl phosphate, yielding undecaprenyl-pyrophosphoryl-MurNAc-pentapeptide, known as lipid I. This Borrelia hermsii (strain HS1 / DAH) protein is Phospho-N-acetylmuramoyl-pentapeptide-transferase.